A 150-amino-acid chain; its full sequence is Large ribosomal subunit protein bL9 (150 aa).

It belongs to the bacterial ribosomal protein bL9 family.

In terms of biological role, binds to the 23S rRNA. This is Large ribosomal subunit protein bL9 from Serratia proteamaculans (strain 568).